A 164-amino-acid chain; its full sequence is MD-2-related lipid-recognition protein 3 (164 aa).

The first 24 residues, 1–24, serve as a signal peptide directing secretion; it reads MAMSHVQPMLLLLVSLFFLPALRG.

In terms of assembly, interacts with RUB1/NEDD8. In terms of processing, neddylated. Post-translationally, ubiquitinated.

The protein resides in the vacuole. It is found in the endoplasmic reticulum. May be involved in herbivory-mediated responses. May play a role in herbivory-associated molecular pattern (HAMP) recognition. May function is jasmonate (JA) signaling in response to HAMP. May play a role in defense response against the pathogens Altenaria brassicicola and Pseudomonas syringae. The protein is MD-2-related lipid-recognition protein 3 of Arabidopsis thaliana (Mouse-ear cress).